The sequence spans 865 residues: Centrosomal protein of 97 kDa (865 aa).

LRR repeat units follow at residues 37–58 (DIHT…EKCK), 59–80 (RLIQ…AKLT), 81–102 (LLRV…KELV), 103–124 (HLEW…NSCT), 125–146 (ALQH…SKLV), 147–168 (SLKT…PAYL), 171–192 (SLAI…SFLA), and 196–205 (ELEQLSIMNN). The LRRCT domain occupies 211-249 (TPSIPGFDYRPYIVSWCLNLRVLDGYVISQKESLKAEWL). The segment at 300-750 (HQRQLMNQSQ…RYGKESDLGD (451 aa)) is CCP110-binding. 3 positions are modified to phosphoserine: Ser-308, Ser-413, and Ser-500. A disordered region spans residues 506-529 (ESTEQKQSDIKKPENTQPENKETI). The segment covering 508 to 527 (TEQKQSDIKKPENTQPENKE) has biased composition (basic and acidic residues). Position 530 is a phosphoserine (Ser-530). Position 542 is a phosphothreonine (Thr-542). The IQ domain occupies 558–587 (LNDAATKLQACWRGFYARNYNPQAKDVRYE). The interaction with MPHOSPH9 stretch occupies residues 587-865 (EIRLRRMQEH…FQLLHVGVTV (279 aa)). Residues 715–769 (QHSLDFEKSSTEGSESSIMGNSIDTVRYGKESDLGDVSEEHGEWNKESSNNEQDN) form a disordered region. The span at 725–738 (TEGSESSIMGNSID) shows a compositional bias: polar residues. Over residues 741–760 (RYGKESDLGDVSEEHGEWNK) the composition is skewed to basic and acidic residues. Residue Ser-763 is modified to Phosphoserine.

Interacts with CALM1, CEP76, KIF24 and TALPID3. Interacts with CCP110. ENKD1 competes with CEP97 for binding to CCP110, destabilizing the interaction between CP110 and CEP97 which promotes the removal of CCP110 and CEP97 from the mother centriole and allows the initiation of ciliogenesis. Via its interaction with CCP110, may indirectly interact with HERC2 and NEURL4. Interacts with MPHOSPH9.

The protein resides in the cytoplasm. Its subcellular location is the cytoskeleton. The protein localises to the microtubule organizing center. It localises to the centrosome. It is found in the centriole. Acts as a key negative regulator of ciliogenesis in collaboration with CCP110 by capping the mother centriole thereby preventing cilia formation. Required for recruitment of CCP110 to the centrosome. In Homo sapiens (Human), this protein is Centrosomal protein of 97 kDa (CEP97).